The sequence spans 505 residues: Glutamate--tRNA ligase (505 aa).

The short motif at 12–22 (PSPTGDPHVGT) is the 'HIGH' region element. The 'KMSKS' region signature appears at 253 to 257 (KLSKR). Lysine 256 provides a ligand contact to ATP.

Belongs to the class-I aminoacyl-tRNA synthetase family. Glutamate--tRNA ligase type 1 subfamily. In terms of assembly, monomer.

The protein resides in the cytoplasm. The enzyme catalyses tRNA(Glu) + L-glutamate + ATP = L-glutamyl-tRNA(Glu) + AMP + diphosphate. Its function is as follows. Catalyzes the attachment of glutamate to tRNA(Glu) in a two-step reaction: glutamate is first activated by ATP to form Glu-AMP and then transferred to the acceptor end of tRNA(Glu). The protein is Glutamate--tRNA ligase of Chlamydia pneumoniae (Chlamydophila pneumoniae).